We begin with the raw amino-acid sequence, 237 residues long: Large ribosomal subunit protein uL1 (237 aa).

Belongs to the universal ribosomal protein uL1 family. As to quaternary structure, part of the 50S ribosomal subunit.

Its function is as follows. Binds directly to 23S rRNA. The L1 stalk is quite mobile in the ribosome, and is involved in E site tRNA release. Functionally, protein L1 is also a translational repressor protein, it controls the translation of the L11 operon by binding to its mRNA. This chain is Large ribosomal subunit protein uL1, found in Myxococcus xanthus (strain DK1622).